The chain runs to 333 residues: Beta-ketoacyl-[acyl-carrier-protein] synthase III (333 aa).

Catalysis depends on residues Cys116 and His258. An ACP-binding region spans residues 259 to 263 (QANKR). Asn288 is a catalytic residue.

Belongs to the thiolase-like superfamily. FabH family. Homodimer.

The protein resides in the cytoplasm. The enzyme catalyses malonyl-[ACP] + acetyl-CoA + H(+) = 3-oxobutanoyl-[ACP] + CO2 + CoA. It functions in the pathway lipid metabolism; fatty acid biosynthesis. In terms of biological role, catalyzes the condensation reaction of fatty acid synthesis by the addition to an acyl acceptor of two carbons from malonyl-ACP. Catalyzes the first condensation reaction which initiates fatty acid synthesis and may therefore play a role in governing the total rate of fatty acid production. Possesses both acetoacetyl-ACP synthase and acetyl transacylase activities. Its substrate specificity determines the biosynthesis of branched-chain and/or straight-chain of fatty acids. The chain is Beta-ketoacyl-[acyl-carrier-protein] synthase III from Koribacter versatilis (strain Ellin345).